Consider the following 141-residue polypeptide: MRHYEIILLIHPDQSEQVPAMLERYKGMIAAGGGKVHRVEDWGRRQLAYLINKLSKAHYLCVNIEADQAVMAELEHAFKFNDAVLRHLTVHKKKAVTGPSAMMKTVEREEFRKASQAGNQTTAPAASPADHAAAPASADRS.

Positions 96 to 141 are disordered; that stretch reads VTGPSAMMKTVEREEFRKASQAGNQTTAPAASPADHAAAPASADRS. Residues 123–141 are compositionally biased toward low complexity; that stretch reads APAASPADHAAAPASADRS.

It belongs to the bacterial ribosomal protein bS6 family.

Binds together with bS18 to 16S ribosomal RNA. The polypeptide is Small ribosomal subunit protein bS6 (Verminephrobacter eiseniae (strain EF01-2)).